The chain runs to 378 residues: Phospho-N-acetylmuramoyl-pentapeptide-transferase (378 aa).

Transmembrane regions (helical) follow at residues Thr27–Asn47, Thr74–Leu94, Tyr96–Asp116, Leu135–Tyr155, Trp184–Tyr204, Gly216–Gly236, Leu256–His276, Ile280–Leu300, Ile305–Val325, and Lys355–Leu375.

This sequence belongs to the glycosyltransferase 4 family. MraY subfamily. Mg(2+) is required as a cofactor.

It localises to the cell inner membrane. It catalyses the reaction UDP-N-acetyl-alpha-D-muramoyl-L-alanyl-gamma-D-glutamyl-meso-2,6-diaminopimeloyl-D-alanyl-D-alanine + di-trans,octa-cis-undecaprenyl phosphate = di-trans,octa-cis-undecaprenyl diphospho-N-acetyl-alpha-D-muramoyl-L-alanyl-D-glutamyl-meso-2,6-diaminopimeloyl-D-alanyl-D-alanine + UMP. It participates in cell wall biogenesis; peptidoglycan biosynthesis. Functionally, catalyzes the initial step of the lipid cycle reactions in the biosynthesis of the cell wall peptidoglycan: transfers peptidoglycan precursor phospho-MurNAc-pentapeptide from UDP-MurNAc-pentapeptide onto the lipid carrier undecaprenyl phosphate, yielding undecaprenyl-pyrophosphoryl-MurNAc-pentapeptide, known as lipid I. In Solibacter usitatus (strain Ellin6076), this protein is Phospho-N-acetylmuramoyl-pentapeptide-transferase.